A 195-amino-acid chain; its full sequence is Flavin-dependent monooxygenase, reductase subunit HsaB (195 aa).

Residues 42-46, 48-49, 63-65, 69-70, and 95-96 contribute to the FAD site; these read PVGFA, QS, CPT, RS, and RF. 160–163 contributes to the NAD(+) binding site; sequence FYRG.

It belongs to the non-flavoprotein flavin reductase family. In terms of assembly, hsaAB monooxygenase consists of an oxygenase component HsaA and a reductase component HsaB.

It carries out the reaction a reduced flavin + NAD(+) = an oxidized flavin + NADH + 2 H(+). The protein operates within lipid metabolism; steroid biosynthesis. Functionally, catalyzes the reduction of free flavins (FMN or FAD) by NADH. Subsequently, the reduced flavins diffuse to the HsaA oxygenase subunit. This Rhodococcus jostii (strain RHA1) protein is Flavin-dependent monooxygenase, reductase subunit HsaB (hsaB).